The following is a 295-amino-acid chain: Reticulon-like protein 1 (295 aa).

At 1–50 the chain is on the cytoplasmic side; sequence MSASAQHSQAQQQQQQKSCNCDLLLWRNPVQTGKYFGGSLLALLILKKVN. The region spanning 20-220 is the Reticulon domain; it reads NCDLLLWRNP…ISNLVKSKTA (201 aa). A helical membrane pass occupies residues 51–73; the sequence is LITFFLKVAYTILFTTGSIEFVS. Residues 74-142 lie on the Lumenal side of the membrane; sequence KLFLGQGLIT…ALFLLHKFFS (69 aa). The chain crosses the membrane as a helical span at residues 143–163; the sequence is WFSIWTIVFVADIFTFTLPVI. At 164–295 the chain is on the cytoplasmic side; it reads YHSYKHEIDA…LQNELEKNNA (132 aa). Phosphothreonine occurs at positions 186 and 219. A compositionally biased stretch (polar residues) spans 219-235; the sequence is TAPVSSTAGPQTASTSK. The disordered stretch occupies residues 219-295; the sequence is TAPVSSTAGP…LQNELEKNNA (77 aa). Ser232 carries the phosphoserine modification. The stretch at 265–295 forms a coiled coil; it reads STTQEFNVDELSNELKKSTKNLQNELEKNNA.

As to quaternary structure, interacts with POM33.

The protein localises to the endoplasmic reticulum membrane. The sequence is that of Reticulon-like protein 1 (RTN1) from Saccharomyces cerevisiae (strain ATCC 204508 / S288c) (Baker's yeast).